The following is a 185-amino-acid chain: MDIDPYKEFGATVELLSFLPSDFFPSVRDLLDTASALYREALESPEHCSPHHTALRQAILCWGELMTLATWVGNNLEDPASRDLVVNYVNTNVGLKIRQLLWFHISCLTFGRETVLEYLVSFGVWIRTPPAYRPPNAPILSTLPETTVVRRRDRGRSPRRRTPSPRRRRSPSPRRRRSQSRESQC.

The tract at residues 136-185 (NAPILSTLPETTVVRRRDRGRSPRRRTPSPRRRRSPSPRRRRSQSRESQC) is disordered. A compositionally biased stretch (basic residues) spans 149-178 (VRRRDRGRSPRRRTPSPRRRRSPSPRRRRS). Phosphoserine; by host occurs at positions 157, 164, and 172. One copy of the 1; half-length repeat lies at 157 to 163 (SPRRRTP). The tract at residues 157–179 (SPRRRTPSPRRRRSPSPRRRRSQ) is 3 X 8 AA repeats of S-P-R-R-R-[PR]-S-Q. The Bipartite nuclear localization signal motif lies at 160–177 (RRTPSPRRRRSPSPRRRR). 2 repeat units span residues 164 to 171 (SPRRRRSP) and 172 to 179 (SPRRRRSQ). Positions 179–185 (QSRESQC) are RNA binding.

The protein belongs to the orthohepadnavirus core antigen family. As to quaternary structure, homodimerizes, then multimerizes. Interacts with cytosol exposed regions of viral L glycoprotein present in the reticulum-to-Golgi compartment. Interacts with human FLNB. Phosphorylated form interacts with host importin alpha; this interaction depends on the exposure of the NLS, which itself depends upon genome maturation and/or phosphorylation of the capsid protein. Interacts with host NUP153. Phosphorylated by host SRPK1, SRPK2, and maybe protein kinase C or GAPDH. Phosphorylation is critical for pregenomic RNA packaging. Protein kinase C phosphorylation is stimulated by HBx protein and may play a role in transport of the viral genome to the nucleus at the late step during the viral replication cycle.

The protein localises to the virion. It localises to the host cytoplasm. Its function is as follows. Self assembles to form an icosahedral capsid. Most capsids appear to be large particles with an icosahedral symmetry of T=4 and consist of 240 copies of capsid protein, though a fraction forms smaller T=3 particles consisting of 180 capsid proteins. Entering capsids are transported along microtubules to the nucleus. Phosphorylation of the capsid is thought to induce exposure of nuclear localization signal in the C-terminal portion of the capsid protein that allows binding to the nuclear pore complex via the importin (karyopherin-) alpha and beta. Capsids are imported in intact form through the nuclear pore into the nuclear basket, where it probably binds NUP153. Only capsids that contain the mature viral genome can release the viral DNA and capsid protein into the nucleoplasm. Immature capsids get stuck in the basket. Capsids encapsulate the pre-genomic RNA and the P protein. Pre-genomic RNA is reverse-transcribed into DNA while the capsid is still in the cytoplasm. The capsid can then either be directed to the nucleus, providing more genomes for transcription, or bud through the endoplasmic reticulum to provide new virions. The chain is Capsid protein from Hepatitis B virus genotype A2 subtype adw2 (strain Rutter 1979) (HBV-A).